The primary structure comprises 175 residues: Calcineurin subunit B (175 aa).

4 EF-hand domains span residues 21–56, 60–88, 90–125, and 131–166; these read DEIE…SANP, RIME…FSGR, SKDE…MVGS, and QLQQ…TEVA. Positions 34, 36, 38, 40, 45, 66, 68, 70, 72, 77, 103, 105, 107, 114, 144, 146, 148, 150, and 155 each coordinate Ca(2+).

The protein belongs to the calcineurin regulatory subunit family. As to quaternary structure, composed of a catalytic subunit (A) and a regulatory subunit (B).

Regulatory subunit of calcineurin, a calcium-dependent, calmodulin stimulated protein phosphatase. Confers calcium sensitivity. This is Calcineurin subunit B (CNB1) from Candida glabrata (strain ATCC 2001 / BCRC 20586 / JCM 3761 / NBRC 0622 / NRRL Y-65 / CBS 138) (Yeast).